Here is a 686-residue protein sequence, read N- to C-terminus: Proprotein convertase subtilisin/kexin type 9 (686 aa).

Positions 1–28 (MGTVSSRRLWWPLPLLLLLLLGPAGTRA) are cleaved as a signal peptide. Positions 29-150 (QEDDDDDYEE…IEEDSSVFAQ (122 aa)) are excised as a propeptide. Residue tyrosine 36 is modified to Sulfotyrosine. Phosphoserine is present on serine 45. The region spanning 75–147 (TYVVVLKEET…VDYIEEDSSV (73 aa)) is the Inhibitor I9 domain. In terms of domain architecture, Peptidase S8 spans 153–459 (PWNLERITPA…GWQLFCRTVW (307 aa)). Catalysis depends on charge relay system residues aspartate 184 and histidine 224. 2 disulfide bridges follow: cysteine 221/cysteine 253 and cysteine 321/cysteine 356. Residue serine 384 is the Charge relay system of the active site. The interval 448–686 (GEGWQLFCRT…CRSQHLAQAS (239 aa)) is C-terminal domain. 3 cysteine pairs are disulfide-bonded: cysteine 455–cysteine 525, cysteine 475–cysteine 524, and cysteine 484–cysteine 507. An N-linked (GlcNAc...) asparagine glycan is attached at asparagine 531. 6 disulfides stabilise this stretch: cysteine 532/cysteine 599, cysteine 550/cysteine 598, cysteine 560/cysteine 586, cysteine 606/cysteine 677, cysteine 624/cysteine 676, and cysteine 633/cysteine 652. Serine 686 is modified (phosphoserine).

Belongs to the peptidase S8 family. Monomer. Can self-associate to form dimers and higher multimers which may have increased LDLR degrading activity. The precursor protein but not the mature protein may form multimers. Interacts with APOB, VLDLR, LRP8/APOER2 and BACE1. The full-length immature form (pro-PCSK9) interacts with SCNN1A, SCNN1B and SCNN1G. The pro-PCSK9 form (via C-terminal domain) interacts with LDLR. Interacts (via the C-terminal domain) with ANXA2 (via repeat Annexin 1); the interaction inhibits the degradation of LDLR. Ca(2+) is required as a cofactor. Cleavage by furin and PCSK5 generates a truncated inactive protein that is unable to induce LDLR degradation. In terms of processing, undergoes autocatalytic cleavage in the endoplasmic reticulum to release the propeptide from the N-terminus and the cleavage of the propeptide is strictly required for its maturation and activation. The cleaved propeptide however remains associated with the catalytic domain through non-covalent interactions, preventing potential substrates from accessing its active site. As a result, it is secreted from cells as a propeptide-containing, enzymatically inactive protein. Post-translationally, phosphorylation protects the propeptide against proteolysis.

The protein localises to the cytoplasm. Its subcellular location is the secreted. The protein resides in the endosome. It is found in the lysosome. It localises to the cell surface. The protein localises to the endoplasmic reticulum. Its subcellular location is the golgi apparatus. Its activity is regulated as follows. Its proteolytic activity is autoinhibited by the non-covalent binding of the propeptide to the catalytic domain. Inhibited by EGTA. Crucial player in the regulation of plasma cholesterol homeostasis. Binds to low-density lipid receptor family members: low density lipoprotein receptor (LDLR), very low density lipoprotein receptor (VLDLR), apolipoprotein E receptor (LRP1/APOER) and apolipoprotein receptor 2 (LRP8/APOER2), and promotes their degradation in intracellular acidic compartments. Acts via a non-proteolytic mechanism to enhance the degradation of the hepatic LDLR through a clathrin LDLRAP1/ARH-mediated pathway. May prevent the recycling of LDLR from endosomes to the cell surface or direct it to lysosomes for degradation. Can induce ubiquitination of LDLR leading to its subsequent degradation. Inhibits intracellular degradation of APOB via the autophagosome/lysosome pathway in a LDLR-independent manner. Involved in the disposal of non-acetylated intermediates of BACE1 in the early secretory pathway. Inhibits epithelial Na(+) channel (ENaC)-mediated Na(+) absorption by reducing ENaC surface expression primarily by increasing its proteasomal degradation. Regulates neuronal apoptosis via modulation of LRP8/APOER2 levels and related anti-apoptotic signaling pathways. This chain is Proprotein convertase subtilisin/kexin type 9 (PCSK9), found in Saguinus labiatus (Red-chested mustached tamarin).